Here is a 381-residue protein sequence, read N- to C-terminus: Tafazzin (381 aa).

Residues methionine 1–arginine 25 lie on the Mitochondrial intermembrane side of the membrane. An intramembrane segment occupies phenylalanine 26–tyrosine 47. Residues asparagine 48–aspartate 381 are Mitochondrial intermembrane-facing. Positions histidine 77–aspartate 82 match the HXXXXD motif motif. The segment at leucine 215–glutamate 232 is required for membrane insertion.

It belongs to the taffazin family.

Its subcellular location is the mitochondrion outer membrane. The protein resides in the mitochondrion inner membrane. The enzyme catalyses 1'-[1,2-diacyl-sn-glycero-3-phospho],3'-[1-acyl-sn-glycero-3-phospho]-glycerol + a 1,2-diacyl-sn-glycero-3-phosphocholine = a cardiolipin + a 1-acyl-sn-glycero-3-phosphocholine. It carries out the reaction 1,2-di-(9Z,12Z-octadecadienoyl)-sn-glycero-3-phosphocholine + 1'-[1,2-di-(9Z,12Z-octadecadienoyl)-sn-glycero-3-phospho]-3'-[1-(9Z,12Z-octadecadienoyl)-sn-glycero-3-phospho]-glycerol = 1-(9Z,12Z)-octadecadienoyl-sn-glycero-3-phosphocholine + 1',3'-bis-[1,2-di-(9Z,12Z-octadecadienoyl)-sn-glycero-3-phospho]-glycerol. It catalyses the reaction 1'-[1,2-di-(9Z-octadecenoyl)-sn-glycero-3-phospho]-3'-[1-(9Z-octadecenoyl)-2-hexadecanoyl-sn-glycero-3-phospho]-glycerol + 1-hexadecanoyl-sn-glycero-3-phosphocholine = 1'-[1,2-di-(9Z-octadecenoyl)-sn-glycero-3-phospho]-3'-[1-(9Z-octadecenoyl)-sn-glycero-3-phospho]-glycerol + 1,2-dihexadecanoyl-sn-glycero-3-phosphocholine. The catalysed reaction is 1'-[1,2-di-(9Z-octadecenoyl)-sn-glycero-3-phospho]-3'-[1-(9Z-octadecenoyl)-2-(9Z-hexadecenoyl)-sn-glycero-3-phospho]-glycerol + 1-(9Z-hexadecenoyl)-sn-glycero-3-phosphocholine = 1,2-di-(9Z-hexadecenoyl)-sn-glycero-3-phosphocholine + 1'-[1,2-di-(9Z-octadecenoyl)-sn-glycero-3-phospho]-3'-[1-(9Z-octadecenoyl)-sn-glycero-3-phospho]-glycerol. The enzyme catalyses 1',3'-bis[1,2-di-(9Z-octadecenoyl)-sn-glycero-3-phospho]-glycerol + 1-(9Z-octadecenoyl)-sn-glycero-3-phosphocholine = 1'-[1,2-di-(9Z-octadecenoyl)-sn-glycero-3-phospho]-3'-[1-(9Z-octadecenoyl)-sn-glycero-3-phospho]-glycerol + 1,2-di-(9Z-octadecenoyl)-sn-glycero-3-phosphocholine. It carries out the reaction 1'-[1,2-di-(9Z-octadecenoyl)-sn-glycero-3-phospho]-3'-[1-(9Z-octadecenoyl)-2-(9Z,12Z-octadecadienoyl)-sn-glycero-3-phospho]-glycerol + 1-(9Z,12Z)-octadecadienoyl-sn-glycero-3-phosphocholine = 1,2-di-(9Z,12Z-octadecadienoyl)-sn-glycero-3-phosphocholine + 1'-[1,2-di-(9Z-octadecenoyl)-sn-glycero-3-phospho]-3'-[1-(9Z-octadecenoyl)-sn-glycero-3-phospho]-glycerol. It catalyses the reaction 1'-[1,2-di-(9Z-octadecenoyl)-sn-glycero-3-phospho]-3'-[1-(9Z-octadecenoyl)-2-(9Z-hexadecenoyl)-sn-glycero-3-phospho]-glycerol + 1-hexadecanoyl-sn-glycero-3-phosphocholine = 1-hexadecanoyl-2-(9Z-hexadecenoyl)-sn-glycero-3-phosphocholine + 1'-[1,2-di-(9Z-octadecenoyl)-sn-glycero-3-phospho]-3'-[1-(9Z-octadecenoyl)-sn-glycero-3-phospho]-glycerol. The catalysed reaction is 1'-[1,2-di-(9Z-octadecenoyl)-sn-glycero-3-phospho]-3'-[1-(9Z-octadecenoyl)-2-hexadecanoyl-sn-glycero-3-phospho]-glycerol + 1-(9Z-hexadecenoyl)-sn-glycero-3-phosphocholine = 1-(9Z-hexadecenoyl)-2-hexadecanoyl-sn-glycero-3-phosphocholine + 1'-[1,2-di-(9Z-octadecenoyl)-sn-glycero-3-phospho]-3'-[1-(9Z-octadecenoyl)-sn-glycero-3-phospho]-glycerol. The enzyme catalyses 2 1'-[1,2-diacyl-sn-glycero-3-phospho],3'-[1-acyl-sn-glycero-3-phospho]-glycerol = 1',3'-bis-[1-acyl-sn-glycero-3-phospho]-glycerol + a cardiolipin. It carries out the reaction 2 1'-[1,2-di-(9Z-octadecenoyl)-sn-glycero-3-phospho]-3'-[1-(9Z-octadecenoyl)-sn-glycero-3-phospho]-glycerol = 1',3'-bis-[1-(9Z-octadecenoyl)-sn-glycero-3-phospho]-glycerol + 1',3'-bis[1,2-di-(9Z-octadecenoyl)-sn-glycero-3-phospho]-glycerol. It catalyses the reaction 1,2-di-(9Z-hexadecenoyl)-sn-glycero-3-phosphocholine + 1-hexadecanoyl-sn-glycero-3-phosphocholine = 1-hexadecanoyl-2-(9Z-hexadecenoyl)-sn-glycero-3-phosphocholine + 1-(9Z-hexadecenoyl)-sn-glycero-3-phosphocholine. The catalysed reaction is 1'-[1,2-di-(9Z,12Z-octadecadienoyl)-sn-glycero-3-phospho]-3'-[1-(9Z,12Z-octadecadienoyl)-sn-glycero-3-phospho]-glycerol + 1,2-di-(9Z-octadecenoyl)-sn-glycero-3-phosphocholine = 1'-[1,2-di-(9Z,12Z-octadecadienoyl)-sn-glycero-3-phospho]-3'-[1-(9Z,12Z-octadecadienoyl)-2-(9Z-octadecenoyl)-sn-glycero-3-phospho]-glycerol + 1-(9Z-octadecenoyl)-sn-glycero-3-phosphocholine. It functions in the pathway phospholipid metabolism. In terms of biological role, acyltransferase required to remodel newly synthesized phospholipid cardiolipin (1',3'-bis-[1,2-diacyl-sn-glycero-3-phospho]-glycerol or CL), a key component of the mitochondrial inner membrane, with tissue specific acyl chains necessary for adequate mitochondrial function. Its role in cellular physiology is to improve mitochondrial performance. CL is critical for the coassembly of lipids and proteins in mitochondrial membranes, for instance, remodeling of the acyl groups of CL in the mitochondrial inner membrane affects the assembly and stability of respiratory chain complex IV and its supercomplex forms. Catalyzes the transacylation between phospholipids and lysophospholipids, with the highest rate being between phosphatidylcholine (1,2-diacyl-sn-glycero-3-phosphocholine or PC) and CL. Catalyzes both 1-acyl-sn-glycero-3-phosphocholine (lysophosphatidylcholine or LPC) reacylation and PC-CL transacylation, that means, it exchanges acyl groups between CL and PC by a combination of forward and reverse transacylations. Also catalyzes transacylations between other phospholipids such as phosphatidylethanolamine (1,2-diacyl-sn-glycero-3-phosphoethanolamine or PE) and CL, between PC and PE, and between PC and phosphatidate (1,2-diacyl-sn-glycero-3-phosphate or PA), although at lower rate. Not regiospecific, it transfers acyl groups into any of the sn-1 and sn-2 positions of the monolysocardiolipin (MLCL), which is an important prerequisite for uniformity and symmetry in CL acyl distribution. Cannot transacylate dilysocardiolipin (DLCL), thus, the role of MLCL is limited to that of an acyl acceptor. CoA-independent, it can reshuffle molecular species within a single phospholipid class. Redistributes fatty acids between MLCL, CL, and other lipids, which prolongs the half-life of CL. Its action is completely reversible, which allows for cyclic changes, such as fission and fusion or bending and flattening of the membrane. Hence, by contributing to the flexibility of the lipid composition, it plays an important role in the dynamics of mitochondria membranes. Essential for the final stage of spermatogenesis, spermatid individualization. Required for the initiation of mitophagy. This Saccharomyces cerevisiae (strain ATCC 204508 / S288c) (Baker's yeast) protein is Tafazzin (TAZ1).